The sequence spans 137 residues: Small ribosomal subunit protein bS16 (137 aa).

The protein belongs to the bacterial ribosomal protein bS16 family.

In Leuconostoc citreum (strain KM20), this protein is Small ribosomal subunit protein bS16.